Reading from the N-terminus, the 106-residue chain is NADH dehydrogenase [ubiquinone] 1 alpha subcomplex subunit 8-B (106 aa).

At Ser-2 the chain carries N-acetylserine. CHCH domains lie at 26–67 and 68–106; these read GMRC…LKDL and HQKC…CPLK. 3 consecutive short sequence motifs (cx9C motif) follow at residues 29–39, 49–59, and 71–81; these read CMPENVAFLKC, CLDKGRDVTRC, and CQKEMDDYVGC. Disulfide bonds link Cys-29–Cys-59, Cys-39–Cys-49, Cys-71–Cys-103, and Cys-81–Cys-92. The Cx10C motif signature appears at 92 to 103; that stretch reads CRKEQEAFEKVC.

The protein belongs to the complex I NDUFA8 subunit family. In terms of assembly, complex I is composed of at least 49 different subunits.

It is found in the mitochondrion. Its subcellular location is the mitochondrion intermembrane space. In terms of biological role, accessory subunit of the mitochondrial membrane respiratory chain NADH dehydrogenase (Complex I), that is believed not to be involved in catalysis. Complex I functions in the transfer of electrons from NADH to the respiratory chain. The immediate electron acceptor for the enzyme is believed to be ubiquinone. The polypeptide is NADH dehydrogenase [ubiquinone] 1 alpha subcomplex subunit 8-B (Arabidopsis thaliana (Mouse-ear cress)).